A 522-amino-acid polypeptide reads, in one-letter code: BTB/POZ domain-containing protein 3 (522 aa).

Residues 120 to 190 enclose the BTB domain; the sequence is ADVHFVVGPP…IYCDEIDLAA (71 aa). One can recognise a BACK domain in the interval 235–300; it reads FEEPDLTQRC…NWAEVECQRQ (66 aa).

Strongly expressed in the primary visual cortex.

It is found in the cytoplasm. The protein localises to the cytosol. Its subcellular location is the nucleus. Functionally, acts as a key regulator of dendritic field orientation during development of sensory cortex. Also directs dendrites toward active axon terminals when ectopically expressed. The sequence is that of BTB/POZ domain-containing protein 3 (BTBD3) from Callithrix jacchus (White-tufted-ear marmoset).